A 67-amino-acid polypeptide reads, in one-letter code: Conotoxin Cl6.6b (67 aa).

The N-terminal stretch at 1 to 24 (MKLTCVLIAAVLLLAVCQLDSADA) is a signal peptide. Positions 25–37 (TGYMRKNPSLRSP) are excised as a propeptide. Cystine bridges form between C43-C57, C50-C61, and C56-C65.

Belongs to the conotoxin O1 superfamily. Expressed by the venom duct.

It is found in the secreted. The polypeptide is Conotoxin Cl6.6b (Californiconus californicus (California cone)).